The sequence spans 172 residues: Translationally-controlled tumor protein homolog (172 aa).

The region spanning 1-172 (MKIYKDIITG…FKHGLDEEKC (172 aa)) is the TCTP domain.

Belongs to the TCTP family.

It is found in the cytoplasm. Its function is as follows. Involved in calcium binding and microtubule stabilization. The chain is Translationally-controlled tumor protein homolog from Drosophila yakuba (Fruit fly).